The sequence spans 286 residues: Bifunctional protein FolD (286 aa).

Residues 165 to 167 (GRS), Ser190, and Val231 contribute to the NADP(+) site.

It belongs to the tetrahydrofolate dehydrogenase/cyclohydrolase family. Homodimer.

It carries out the reaction (6R)-5,10-methylene-5,6,7,8-tetrahydrofolate + NADP(+) = (6R)-5,10-methenyltetrahydrofolate + NADPH. The enzyme catalyses (6R)-5,10-methenyltetrahydrofolate + H2O = (6R)-10-formyltetrahydrofolate + H(+). It participates in one-carbon metabolism; tetrahydrofolate interconversion. Its function is as follows. Catalyzes the oxidation of 5,10-methylenetetrahydrofolate to 5,10-methenyltetrahydrofolate and then the hydrolysis of 5,10-methenyltetrahydrofolate to 10-formyltetrahydrofolate. The chain is Bifunctional protein FolD from Bacillus cereus (strain AH187).